Consider the following 226-residue polypeptide: UPF0758 protein SPT_1135 (226 aa).

The MPN domain occupies 103-225; sequence SILSSQKLAK…YFSYREKTDL (123 aa). Zn(2+)-binding residues include His-174, His-176, and Asp-187. Positions 174–187 match the JAMM motif motif; it reads HNHPSGAVAPSQND.

The protein belongs to the UPF0758 family.

The sequence is that of UPF0758 protein SPT_1135 from Streptococcus pneumoniae (strain Taiwan19F-14).